The chain runs to 103 residues: Large ribosomal subunit protein P2 (103 aa).

A disordered region spans residues 64–103 (LAISSSQKSEPAQPADTAESTQATENKEEEDEDFDIFAAF). Acidic residues predominate over residues 90–103 (KEEEDEDFDIFAAF).

Belongs to the eukaryotic ribosomal protein P1/P2 family. In terms of assembly, component of the large ribosomal subunit.

The protein resides in the cytoplasm. In terms of biological role, plays an important role in the elongation step of protein synthesis. The polypeptide is Large ribosomal subunit protein P2 (RPP2A) (Encephalitozoon cuniculi (strain GB-M1) (Microsporidian parasite)).